Consider the following 431-residue polypeptide: Histidine--tRNA ligase (431 aa).

This sequence belongs to the class-II aminoacyl-tRNA synthetase family. Homodimer.

It is found in the cytoplasm. The catalysed reaction is tRNA(His) + L-histidine + ATP = L-histidyl-tRNA(His) + AMP + diphosphate + H(+). This is Histidine--tRNA ligase from Limosilactobacillus fermentum (strain NBRC 3956 / LMG 18251) (Lactobacillus fermentum).